A 266-amino-acid polypeptide reads, in one-letter code: Proteasome subunit beta type-7 (266 aa).

The propeptide at 1–34 (MENLNRGGFDFDLCNRNNVLEKTGLRMKGFMKTG) is removed in mature form. Residue threonine 35 is the Nucleophile of the active site.

Belongs to the peptidase T1B family. The 26S proteasome consists of a 20S proteasome core and two 19S regulatory subunits. The 20S proteasome core is composed of 28 subunits that are arranged in four stacked rings, resulting in a barrel-shaped structure. The two end rings are each formed by seven alpha subunits, and the two central rings are each formed by seven beta subunits. The catalytic chamber with the active sites is on the inside of the barrel.

The protein resides in the cytoplasm. Its subcellular location is the nucleus. It carries out the reaction Cleavage of peptide bonds with very broad specificity.. Functionally, the proteasome is a multicatalytic proteinase complex which is characterized by its ability to cleave peptides with Arg, Phe, Tyr, Leu, and Glu adjacent to the leaving group at neutral or slightly basic pH. The proteasome has an ATP-dependent proteolytic activity. The protein is Proteasome subunit beta type-7 (psmB7) of Dictyostelium discoideum (Social amoeba).